The sequence spans 610 residues: Atypical kinase COQ8, mitochondrial (610 aa).

Residues 98–111 (GVKHLQEQSSKEIK) are compositionally biased toward basic and acidic residues. Positions 98–144 (GVKHLQEQSSKEIKNPISQPILPNKKDEISPAKPSAIDSSIKDVTKS) are disordered.

This sequence belongs to the protein kinase superfamily. ADCK protein kinase family.

It localises to the mitochondrion. The protein operates within cofactor biosynthesis; ubiquinone biosynthesis. Atypical kinase involved in the biosynthesis of coenzyme Q, also named ubiquinone, an essential lipid-soluble electron transporter for aerobic cellular respiration. Its substrate specificity is still unclear: may act as a protein kinase that mediates phosphorylation of coq3. According to other reports, acts as a small molecule kinase, possibly a lipid kinase that phosphorylates a prenyl lipid in the ubiquinone biosynthesis pathway, as suggested by its ability to bind coenzyme Q lipid intermediates. In Schizosaccharomyces pombe (strain 972 / ATCC 24843) (Fission yeast), this protein is Atypical kinase COQ8, mitochondrial.